Consider the following 508-residue polypeptide: Galactose-1-phosphate uridylyltransferase (508 aa).

This sequence belongs to the galactose-1-phosphate uridylyltransferase type 2 family.

The protein localises to the cytoplasm. It catalyses the reaction alpha-D-galactose 1-phosphate + UDP-alpha-D-glucose = alpha-D-glucose 1-phosphate + UDP-alpha-D-galactose. It functions in the pathway carbohydrate metabolism; galactose metabolism. The sequence is that of Galactose-1-phosphate uridylyltransferase (galT) from Halalkalibacterium halodurans (strain ATCC BAA-125 / DSM 18197 / FERM 7344 / JCM 9153 / C-125) (Bacillus halodurans).